Here is a 694-residue protein sequence, read N- to C-terminus: Nuclear cap-binding protein subunit 3 (694 aa).

The segment at 1-47 is disordered; the sequence is MAAVRSLRVSVKSDSASDRSESDSESDSDRDAREAEPMEVEEGEVEL. A compositionally biased stretch (basic and acidic residues) spans 15 to 36; that stretch reads SASDRSESDSESDSDRDAREAE. Over residues 37-47 the composition is skewed to acidic residues; that stretch reads PMEVEEGEVEL. Residues 126 to 187 form an RNA recognition motif (RRM) domain region; the sequence is EALHMSGVDD…LSRMPDKEEV (62 aa). A WLDD motif; essential for 7-methylguanosine-containing mRNA cap binding motif is present at residues 155–158; sequence WIDD. 3 disordered regions span residues 183-277, 336-430, and 461-694; these read DKEE…VKPF, ILKT…MDYD, and LRNS…DSDS. Positions 189–203 are enriched in polar residues; it reads NTDSSKPSELPVQTQ. A compositionally biased stretch (acidic residues) spans 212 to 235; that stretch reads DDDDDDDEEEEGEVDDDDDDDEED. The span at 236-264 shows a compositional bias: basic and acidic residues; that stretch reads EKARDIEDETEKKPQETRETSLSQAERDS. Positions 368–386 are enriched in acidic residues; the sequence is EPIEEEEEEEEDGEEDMDA. Residues 387-404 are compositionally biased toward basic and acidic residues; it reads DDRVVEYKDRGEKERGPR. The span at 477–496 shows a compositional bias: gly residues; sequence IGGGGGGGSGGAVEGRGEGG. Basic and acidic residues-rich tracts occupy residues 501-517, 563-595, and 605-618; these read TSEK…EKRQ, SRRE…DKKT, and SHKD…DKPS. Residues 634-646 are compositionally biased toward acidic residues; that stretch reads DSDGVEDEDEEDD. Residues 685–694 are compositionally biased toward low complexity; it reads DGSNGSDSDS.

Belongs to the NCBP3 family. As to quaternary structure, component of an alternative cap-binding complex (CBC) composed of NCBP1/CBP80 and NCBP3.

Its subcellular location is the nucleus. It localises to the cytoplasm. Its function is as follows. Associates with NCBP1/CBP80 to form an alternative cap-binding complex (CBC) which plays a key role in mRNA export. NCBP3 serves as adapter protein linking the capped RNAs (m7GpppG-capped RNA) to NCBP1/CBP80. Unlike the conventional CBC with NCBP2 which binds both small nuclear RNA (snRNA) and messenger (mRNA) and is involved in their export from the nucleus, the alternative CBC with NCBP3 does not bind snRNA and associates only with mRNA thereby playing a role in only mRNA export. In Danio rerio (Zebrafish), this protein is Nuclear cap-binding protein subunit 3.